A 378-amino-acid polypeptide reads, in one-letter code: Cytochrome P450 monooxygenase pytD (378 aa).

Position 321 (Cys-321) interacts with heme.

The protein belongs to the cytochrome P450 family. Requires heme as cofactor.

Its pathway is secondary metabolite biosynthesis. Its function is as follows. Cytochrome P450 monooxygenase pytD; part of the gene cluster that mediates the biosynthesis of pyranterreones, a family of antioxidative compounds. The first step of pyranonigrins biosynthesis is performed by the hybrid PKS-NRPS synthetase pytA that condenses 4 malonyl-CoA units ato the acetyl starter unit by the modular PKS of pytA. The acyl chain is then connected to an L-serine through the amide bond by the modular NRPS of pytA. A tetramic acid is formed and released from the PKS-NRPS pytA to give pyranterreone 5 with the help of the thioesterase pytI. Pyranterreone 5 could be methylated by pytC to afford pyranterreone 6. Both pyranterreones 5 and 6 are subsequently oxidized by the FAD-linked oxidoreductase pytB and the cytochrome P450 monooxygenase pytD to form the fused gamma-pyrone core, resulting in pyranterreones 7 and 11, respectively. The hydroxy group at C-8 of pyranterreones 7 and 11 are dehydrated by the aspartyl protease pytH to form a delta-7 double bond to give pyranterreones 3 and 1, 2 accordingly. The exo-methylene of pyranterreone 3 could be reduced into a pendant methyl by reductase pytE to provide pyranterreone 4, also known as cordylactam. Pyranterreone 4 can be reconverted to pyranterreone 3 through pytB-catalyzed dehydrogenation or further oxidized to pyranterreones 9 and 10. This chain is Cytochrome P450 monooxygenase pytD, found in Aspergillus terreus (strain NIH 2624 / FGSC A1156).